A 147-amino-acid polypeptide reads, in one-letter code: uncharacterized protein (147 aa).

Residues 29-147 (PYGNNSVHQG…GHHHGHHHKH (119 aa)) form a disordered region. Composition is skewed to polar residues over residues 34-45 (SVHQGQPHTDQN) and 60-73 (PQAQYGNAGQNQPS). Gly residues predominate over residues 75–92 (PFGGAGYTGPTAGTGFGN). The span at 122–147 (DGHHKKHGRKEHDHHHGHHHGHHHKH) shows a compositional bias: basic residues.

This is an uncharacterized protein from Caenorhabditis elegans.